Here is a 699-residue protein sequence, read N- to C-terminus: Elongation factor G (699 aa).

Residues 10–292 form the tr-type G domain; sequence NRTRNIGIMA…AVIDYLPSPT (283 aa). Residues 19–26, 90–94, and 144–147 contribute to the GTP site; these read AHIDAGKT, DTPGH, and NKMD. The tract at residues 292–312 is disordered; the sequence is TDVPAIRGEEDDGSEGSRSAS.

This sequence belongs to the TRAFAC class translation factor GTPase superfamily. Classic translation factor GTPase family. EF-G/EF-2 subfamily.

It is found in the cytoplasm. In terms of biological role, catalyzes the GTP-dependent ribosomal translocation step during translation elongation. During this step, the ribosome changes from the pre-translocational (PRE) to the post-translocational (POST) state as the newly formed A-site-bound peptidyl-tRNA and P-site-bound deacylated tRNA move to the P and E sites, respectively. Catalyzes the coordinated movement of the two tRNA molecules, the mRNA and conformational changes in the ribosome. This is Elongation factor G from Coxiella burnetii (strain RSA 331 / Henzerling II).